The sequence spans 376 residues: N-acetyldiaminopimelate deacetylase (376 aa).

Asp-69 is a catalytic residue. Glu-128 functions as the Proton acceptor in the catalytic mechanism.

It belongs to the peptidase M20A family. N-acetyldiaminopimelate deacetylase subfamily.

It catalyses the reaction N-acetyl-(2S,6S)-2,6-diaminopimelate + H2O = (2S,6S)-2,6-diaminopimelate + acetate. It participates in amino-acid biosynthesis; L-lysine biosynthesis via DAP pathway; LL-2,6-diaminopimelate from (S)-tetrahydrodipicolinate (acetylase route): step 3/3. In terms of biological role, catalyzes the conversion of N-acetyl-diaminopimelate to diaminopimelate and acetate. This is N-acetyldiaminopimelate deacetylase from Bacillus cereus (strain B4264).